The following is a 294-amino-acid chain: NAD kinase (294 aa).

The active-site Proton acceptor is Asp74. Residues 74-75 (DG), 148-149 (NE), His159, Arg176, Asp178, and 189-194 (TAYSLS) each bind NAD(+).

The protein belongs to the NAD kinase family. Requires a divalent metal cation as cofactor.

The protein localises to the cytoplasm. The catalysed reaction is NAD(+) + ATP = ADP + NADP(+) + H(+). In terms of biological role, involved in the regulation of the intracellular balance of NAD and NADP, and is a key enzyme in the biosynthesis of NADP. Catalyzes specifically the phosphorylation on 2'-hydroxyl of the adenosine moiety of NAD to yield NADP. The protein is NAD kinase of Pseudoalteromonas translucida (strain TAC 125).